Reading from the N-terminus, the 470-residue chain is V-type ATP synthase beta chain (470 aa).

The protein belongs to the ATPase alpha/beta chains family.

In terms of biological role, produces ATP from ADP in the presence of a proton gradient across the membrane. The V-type beta chain is a regulatory subunit. In Deinococcus geothermalis (strain DSM 11300 / CIP 105573 / AG-3a), this protein is V-type ATP synthase beta chain.